The primary structure comprises 252 residues: Probable endonuclease 4 (252 aa).

Residues His56, His96, Glu129, Asp162, His165, His191, Asp204, His206, and Glu233 each coordinate Zn(2+).

This sequence belongs to the AP endonuclease 2 family. The cofactor is Zn(2+).

It carries out the reaction Endonucleolytic cleavage to 5'-phosphooligonucleotide end-products.. Endonuclease IV plays a role in DNA repair. It cleaves phosphodiester bonds at apurinic or apyrimidinic (AP) sites, generating a 3'-hydroxyl group and a 5'-terminal sugar phosphate. This is Probable endonuclease 4 from Mycobacterium marinum (strain ATCC BAA-535 / M).